A 146-amino-acid chain; its full sequence is UPF0756 membrane protein PTH_1817 (146 aa).

4 helical membrane-spanning segments follow: residues 6-26 (LLIG…ILLI), 46-66 (MGLT…KASW), 69-89 (IISS…ALAT), and 105-125 (IVFG…GIPV).

The protein belongs to the UPF0756 family.

The protein localises to the cell membrane. The chain is UPF0756 membrane protein PTH_1817 from Pelotomaculum thermopropionicum (strain DSM 13744 / JCM 10971 / SI).